Here is a 244-residue protein sequence, read N- to C-terminus: Phosphoadenosine 5'-phosphosulfate reductase (244 aa).

The active-site Nucleophile; cysteine thiosulfonate intermediate is the Cys239.

It belongs to the PAPS reductase family. CysH subfamily.

Its subcellular location is the cytoplasm. It catalyses the reaction [thioredoxin]-disulfide + sulfite + adenosine 3',5'-bisphosphate + 2 H(+) = [thioredoxin]-dithiol + 3'-phosphoadenylyl sulfate. It functions in the pathway sulfur metabolism; hydrogen sulfide biosynthesis; sulfite from sulfate: step 3/3. In terms of biological role, catalyzes the formation of sulfite from phosphoadenosine 5'-phosphosulfate (PAPS) using thioredoxin as an electron donor. This is Phosphoadenosine 5'-phosphosulfate reductase from Pectobacterium carotovorum subsp. carotovorum (strain PC1).